The chain runs to 421 residues: UDP-N-acetylglucosamine 1-carboxyvinyltransferase 2 (421 aa).

Residue 22–23 (KN) coordinates phosphoenolpyruvate. Position 95 (Arg-95) interacts with UDP-N-acetyl-alpha-D-glucosamine. Cys-119 functions as the Proton donor in the catalytic mechanism. The residue at position 119 (Cys-119) is a 2-(S-cysteinyl)pyruvic acid O-phosphothioketal. UDP-N-acetyl-alpha-D-glucosamine contacts are provided by residues 124 to 128 (RPIEQ), Asp-308, and Val-330.

This sequence belongs to the EPSP synthase family. MurA subfamily.

The protein resides in the cytoplasm. It catalyses the reaction phosphoenolpyruvate + UDP-N-acetyl-alpha-D-glucosamine = UDP-N-acetyl-3-O-(1-carboxyvinyl)-alpha-D-glucosamine + phosphate. It participates in cell wall biogenesis; peptidoglycan biosynthesis. In terms of biological role, cell wall formation. Adds enolpyruvyl to UDP-N-acetylglucosamine. This Staphylococcus saprophyticus subsp. saprophyticus (strain ATCC 15305 / DSM 20229 / NCIMB 8711 / NCTC 7292 / S-41) protein is UDP-N-acetylglucosamine 1-carboxyvinyltransferase 2.